A 154-amino-acid polypeptide reads, in one-letter code: Probable biofilm-surface layer protein B (154 aa).

The N-terminal stretch at 1–30 (MLKRTSFVSSLFISSAVLLSILLPSGQAHA) is a signal peptide.

The protein belongs to the BslA/BslB family. As to quaternary structure, monomer in vitro.

It localises to the secreted. In terms of biological role, has a minor role in biofilm architecture. May contribute to the surface hydrophobicity. The chain is Probable biofilm-surface layer protein B from Bacillus subtilis (strain 168).